The sequence spans 1032 residues: uncharacterized protein (1032 aa).

Over 1–17 the chain is Cytoplasmic; that stretch reads MYEEIRMKFTDIFIRRP. A helical membrane pass occupies residues 18–36; the sequence is VLAVSISLLMIILGLQAIS. The Periplasmic segment spans residues 37–337; it reads KLAVREYPKM…TIAINSSIHE (301 aa). The helical transmembrane segment at 338-357 threads the bilayer; it reads VIKTIGEATLIVLVVILMFI. The Cytoplasmic portion of the chain corresponds to 358 to 363; it reads GSFRAI. A helical transmembrane segment spans residues 364–383; the sequence is LIPILAIPISLIGVLMLLQS. Residues 384 to 389 are Periplasmic-facing; it reads FNFSIN. A helical transmembrane segment spans residues 390–411; the sequence is LMTLLALILAIGLVVDDAIVVL. The Cytoplasmic segment spans residues 412-438; that stretch reads ENIDRHIKAGETPFRAAIIGTREIAVP. Residues 439 to 457 form a helical membrane-spanning segment; it reads VISMTIALIAVYSPMALMG. Topologically, residues 458–470 are periplasmic; sequence GITGTLFKEFALT. Residues 471-493 form a helical membrane-spanning segment; that stretch reads LAGAVFISGVVALTLSPMMSSKL. The Cytoplasmic segment spans residues 494–529; it reads LKSNAKPTWMEERVEHTLGKVNRVYEYMLDLVMLNR. A helical transmembrane segment spans residues 530-548; sequence KSMLAFAVVIFSTLPFLFN. The Periplasmic portion of the chain corresponds to 549 to 852; that stretch reads SLSSELTPNE…ARQLVQEGNA (304 aa). Residues 853-872 form a helical membrane-spanning segment; it reads LAVTFALAVIIIFLVLAIQF. The Cytoplasmic segment spans residues 873–878; sequence ESIRDP. The chain crosses the membrane as a helical span at residues 879–898; it reads MVIMISVPLAVSGALVSLNI. The Periplasmic portion of the chain corresponds to 899-910; the sequence is LSFFSIAGTTLN. Residues 911 to 932 traverse the membrane as a helical segment; it reads IYSQVGLITLVGLITKHGILMC. At 933–960 the chain is on the cytoplasmic side; the sequence is EVAKEEQLNHGKTRIEAITHAAKVRLRP. The chain crosses the membrane as a helical span at residues 961–979; sequence ILMTTAAMVAGLIPLLYAT. Residues 980–992 are Periplasmic-facing; that stretch reads GAGAVSRFSIGIV. Residues 993–1015 traverse the membrane as a helical segment; sequence IVAGLSIGTIFTLFVLPVVYSYV. The Cytoplasmic segment spans residues 1016-1032; that stretch reads ATEHKPLPVFDENKTTH.

This sequence belongs to the resistance-nodulation-cell division (RND) (TC 2.A.6) family.

The protein localises to the cell inner membrane. Functionally, could be a drug efflux pump. This is an uncharacterized protein from Haemophilus influenzae (strain ATCC 51907 / DSM 11121 / KW20 / Rd).